We begin with the raw amino-acid sequence, 126 residues long: Iron-sulfur cluster insertion protein ErpA (126 aa).

A disordered region spans residues 1-21; that stretch reads MNQPANQFNPSSSQPVDPTVL. Iron-sulfur cluster contacts are provided by C54, C118, and C120.

Belongs to the HesB/IscA family. In terms of assembly, homodimer. It depends on iron-sulfur cluster as a cofactor.

Its function is as follows. Required for insertion of 4Fe-4S clusters for at least IspG. This chain is Iron-sulfur cluster insertion protein ErpA, found in Psychrobacter arcticus (strain DSM 17307 / VKM B-2377 / 273-4).